A 428-amino-acid chain; its full sequence is Major capsid protein (428 aa).

Residues 4-24 (IEELRRQRAGINEQIQALATI) are a coiled coil.

It belongs to the HK97 phage major capsid protein family. In terms of processing, the scaffolding domain delta is cleaved by the viral protease and lost after assembly.

The protein localises to the virion. Functionally, major capsid protein that assembles to form an icosahedral capsid. This chain is Major capsid protein, found in Klebsiella oxytoca (Bacteriophage phiKO2).